Reading from the N-terminus, the 733-residue chain is Protein ROG3 (733 aa).

Residues 460-463 (PPNY) carry the PY-motif motif. The segment at 518–566 (RDNLGLPPSASSAAASRSLSPLLNVPAPEDGTERILPQSALGPNSGSVP) is disordered. Residues 523-540 (LPPSASSAAASRSLSPLL) show a composition bias toward low complexity. The PY-motif signature appears at 625 to 628 (PPSY). 2 disordered regions span residues 636–658 (QPRK…SIPT) and 693–733 (ELTS…GNKR). The segment covering 646-658 (RNSSTTLSSSIPT) has biased composition (low complexity).

The protein belongs to the arrestin family. As to quaternary structure, interacts with RSP5 via its 2 PY-motifs.

Its function is as follows. Involved in resistance to GST substrate o-dinitrobenzene (o-DNB). The protein is Protein ROG3 (ROG3) of Saccharomyces cerevisiae (strain ATCC 204508 / S288c) (Baker's yeast).